The following is a 109-amino-acid chain: Thiosulfate sulfurtransferase GlpE (109 aa).

The region spanning 16–104 is the Rhodanese domain; sequence RAEGAVVVDI…WRSTYPGETA (89 aa). The Cysteine persulfide intermediate role is filled by Cys64.

This sequence belongs to the GlpE family.

The protein resides in the cytoplasm. The enzyme catalyses thiosulfate + hydrogen cyanide = thiocyanate + sulfite + 2 H(+). It carries out the reaction thiosulfate + [thioredoxin]-dithiol = [thioredoxin]-disulfide + hydrogen sulfide + sulfite + 2 H(+). Its function is as follows. Transferase that catalyzes the transfer of sulfur from thiosulfate to thiophilic acceptors such as cyanide or dithiols. May function in a CysM-independent thiosulfate assimilation pathway by catalyzing the conversion of thiosulfate to sulfite, which can then be used for L-cysteine biosynthesis. In Pseudomonas entomophila (strain L48), this protein is Thiosulfate sulfurtransferase GlpE.